Reading from the N-terminus, the 963-residue chain is Ubiquitin carboxyl-terminal hydrolase 4 (963 aa).

Residues 11-122 (PDAETQKSEL…GQQPIVRKVV (112 aa)) form the DUSP domain. Positions 27 to 216 (TLQRGAQWYL…LYLGQVLVIE (190 aa)) are necessary for interaction with SART3. The short motif at 133-141 (VEVYLLELK) is the Nuclear export signal element. The region spanning 142–226 (LCENSDPTNV…PQNEDGTWPR (85 aa)) is the Ubiquitin-like 1 domain. The disordered stretch occupies residues 220–255 (EDGTWPRQTLQSKSSTAPSRNFTTSPKSSASPYSSV). A compositionally biased stretch (polar residues) spans 225–243 (PRQTLQSKSSTAPSRNFTT). Positions 229–295 (LQSKSSTAPS…SYNCQEPPSS (67 aa)) are required for USP4 activation by providing conformational flexibility between the DUSP and catalytic domains. Residues 244–255 (SPKSSASPYSSV) are compositionally biased toward low complexity. Positions 302-923 (CGLGNLGNTC…AAYVLFYQRR (622 aa)) constitute a USP domain. The active-site Nucleophile is Cys-311. The interval 384-386 (PQF) is regulates ubiquitin dissociation. The interval 405-407 (LHE) is necessary for interaction with RBL2. Ser-445 bears the Phosphoserine mark. Residues 459-463 (LVCPE) are necessary for interaction with RB1 and RBL2. Residues Cys-461 and Cys-464 each coordinate Zn(2+). The 89-residue stretch at 483-571 (LKKDRVMEVF…IFVYEVCSTS (89 aa)) folds into the Ubiquitin-like 2 domain. Positions 485–775 (KDRVMEVFLV…LQPQKKKKTT (291 aa)) are interacts with DUSP and ubiquitin-like 1 domains and is required for USP4 activation. The interval 637–698 (DEFGSSPLEP…PSETTQKKIK (62 aa)) is disordered. At Ser-655 the chain carries Phosphoserine. A compositionally biased stretch (acidic residues) spans 657–666 (EGEDEEEMEH). Residues Ser-675 and Ser-680 each carry the phosphoserine modification. A Nuclear localization signal motif is present at residues 767–772 (QPQKKK). Zn(2+) is bound by residues Cys-799 and Cys-802. The Proton acceptor role is filled by His-881. Positions 928–963 (YKTPSLSSSGSSDGGTRPSSSQQGLGDDEACSMDTN) are disordered. Residues 932–948 (SLSSSGSSDGGTRPSSS) show a composition bias toward low complexity. Over residues 953 to 963 (GDDEACSMDTN) the composition is skewed to acidic residues.

The protein belongs to the peptidase C19 family. USP4 subfamily. As to quaternary structure, interacts with RB1 (both dephosphorylated and hypophosphorylated forms). Interacts with RBL1 and RBL2. Interacts with ADORA2A (via cytoplasmic C-terminus); the interaction is direct. Interacts with SART3; recruits USP4 to its substrate PRPF3. Post-translationally, phosphorylated at Ser-445 by PKB/AKT1 in response to EGF stimulus, promoting its ability deubiquitinate RHEB. Monoubiquitinated by TRIM21. Ubiquitination does not lead to its proteasomal degradation. Autodeubiquitinated.

It localises to the cytoplasm. Its subcellular location is the nucleus. It catalyses the reaction Thiol-dependent hydrolysis of ester, thioester, amide, peptide and isopeptide bonds formed by the C-terminal Gly of ubiquitin (a 76-residue protein attached to proteins as an intracellular targeting signal).. Its activity is regulated as follows. The completion of the deubiquitinase reaction is mediated by the DUSP and ubiquitin-like 1 domains which promotes the release of ubiquitin from the catalytic site enabling subsequent reactions to occur. Deubiquitinating enzyme that removes conjugated ubiquitin from target proteins. Deubiquitinates PDPK1. Deubiquitinates TRIM21. Deubiquitinates receptor ADORA2A which increases the amount of functional receptor at the cell surface. Deubiquitinates HAS2. Deubiquitinates RHEB in response to EGF signaling, promoting mTORC1 signaling. May regulate mRNA splicing through deubiquitination of the U4 spliceosomal protein PRPF3. This may prevent its recognition by the U5 component PRPF8 thereby destabilizing interactions within the U4/U6.U5 snRNP. May also play a role in the regulation of quality control in the ER. The protein is Ubiquitin carboxyl-terminal hydrolase 4 (USP4) of Pongo abelii (Sumatran orangutan).